The primary structure comprises 134 residues: Large ribosomal subunit protein bL20 (134 aa).

Belongs to the bacterial ribosomal protein bL20 family.

Binds directly to 23S ribosomal RNA and is necessary for the in vitro assembly process of the 50S ribosomal subunit. It is not involved in the protein synthesizing functions of that subunit. In Rhizobium etli (strain ATCC 51251 / DSM 11541 / JCM 21823 / NBRC 15573 / CFN 42), this protein is Large ribosomal subunit protein bL20.